The chain runs to 159 residues: Ribosomal RNA large subunit methyltransferase H (159 aa).

Residues Leu-76, Gly-108, and Phe-127 to Phe-132 contribute to the S-adenosyl-L-methionine site.

The protein belongs to the RNA methyltransferase RlmH family. As to quaternary structure, homodimer.

The protein resides in the cytoplasm. The enzyme catalyses pseudouridine(1915) in 23S rRNA + S-adenosyl-L-methionine = N(3)-methylpseudouridine(1915) in 23S rRNA + S-adenosyl-L-homocysteine + H(+). In terms of biological role, specifically methylates the pseudouridine at position 1915 (m3Psi1915) in 23S rRNA. In Staphylococcus epidermidis (strain ATCC 35984 / DSM 28319 / BCRC 17069 / CCUG 31568 / BM 3577 / RP62A), this protein is Ribosomal RNA large subunit methyltransferase H.